A 380-amino-acid polypeptide reads, in one-letter code: Chorismate synthase (380 aa).

Arg-49 provides a ligand contact to NADP(+). Residues Gly-288, 303 to 307 (KPPSS), and Arg-330 each bind FMN.

It belongs to the chorismate synthase family. FMNH2 is required as a cofactor.

It carries out the reaction 5-O-(1-carboxyvinyl)-3-phosphoshikimate = chorismate + phosphate. It participates in metabolic intermediate biosynthesis; chorismate biosynthesis; chorismate from D-erythrose 4-phosphate and phosphoenolpyruvate: step 7/7. Its function is as follows. Catalyzes the anti-1,4-elimination of the C-3 phosphate and the C-6 proR hydrogen from 5-enolpyruvylshikimate-3-phosphate (EPSP) to yield chorismate, which is the branch point compound that serves as the starting substrate for the three terminal pathways of aromatic amino acid biosynthesis. This reaction introduces a second double bond into the aromatic ring system. The sequence is that of Chorismate synthase from Aeropyrum pernix (strain ATCC 700893 / DSM 11879 / JCM 9820 / NBRC 100138 / K1).